The following is a 101-amino-acid chain: Small ribosomal subunit protein bS6 (101 aa).

It belongs to the bacterial ribosomal protein bS6 family.

In terms of biological role, binds together with bS18 to 16S ribosomal RNA. This chain is Small ribosomal subunit protein bS6, found in Arthrobacter sp. (strain FB24).